Reading from the N-terminus, the 2137-residue chain is Autophagy-related protein 2 (2137 aa).

6 disordered regions span residues 108 to 137 (FGAA…ILPT), 296 to 325 (PPTS…QASD), 339 to 384 (EPSQ…GYLE), 410 to 531 (LHDD…NGGE), 612 to 640 (ALTE…LSPT), and 666 to 749 (DRRH…KSQP). Composition is skewed to polar residues over residues 118 to 128 (SRRPSQAGTHD) and 301 to 315 (TTPV…SSRI). The span at 413–423 (DDLEPPEDLVP) shows a compositional bias: acidic residues. Positions 429 to 440 (PPSSETLRSQTP) are enriched in polar residues. The segment covering 488–505 (TPDVSHSASSPSGSLPSR) has biased composition (low complexity). Over residues 510-526 (RQTAPPSESGSVGSSDV) the composition is skewed to polar residues. Basic and acidic residues predominate over residues 666–675 (DRRHTDETVR). Low complexity predominate over residues 696–706 (SSTESELLSST).

This sequence belongs to the ATG2 family.

Its subcellular location is the preautophagosomal structure membrane. It localises to the endoplasmic reticulum membrane. It catalyses the reaction a 1,2-diacyl-sn-glycero-3-phosphocholine(in) = a 1,2-diacyl-sn-glycero-3-phosphocholine(out). The catalysed reaction is a 1,2-diacyl-sn-glycero-3-phospho-L-serine(in) = a 1,2-diacyl-sn-glycero-3-phospho-L-serine(out). The enzyme catalyses a 1,2-diacyl-sn-glycero-3-phosphoethanolamine(in) = a 1,2-diacyl-sn-glycero-3-phosphoethanolamine(out). In terms of biological role, lipid transfer protein required for autophagosome completion and peroxisome degradation. Tethers the edge of the isolation membrane (IM) to the endoplasmic reticulum (ER) and mediates direct lipid transfer from ER to IM for IM expansion. Atg2 binds to the ER exit site (ERES), which is the membrane source for autophagosome formation, using basic residues in its N-terminal region (NR) and to the expanding edge of the IM through its C-terminal region. The latter binding is assisted by an atg18-PtdIns3P interaction. Atg2 then extracts phospholipids from the membrane source using its NR and transfers them to atg9 to the IM through its predicted beta-sheet-rich structure for membrane expansion. This chain is Autophagy-related protein 2 (atg2), found in Neosartorya fischeri (strain ATCC 1020 / DSM 3700 / CBS 544.65 / FGSC A1164 / JCM 1740 / NRRL 181 / WB 181) (Aspergillus fischerianus).